The following is a 400-amino-acid chain: Pyruvate dehydrogenase E1 component subunit beta-4, chloroplastic (400 aa).

The disordered stretch occupies residues 1 to 34 (MAAASSLHAAPRVGSSSSFSSSSSAGRRSASAAR). The transit peptide at 1–57 (MAAASSLHAAPRVGSSSSFSSSSSAGRRSASAARSVRVAAAAGSCAARRAGGRMVAR) directs the protein to the chloroplast. Positions 9 to 34 (AAPRVGSSSSFSSSSSAGRRSASAAR) are enriched in low complexity. Position 136 (E136) interacts with thiamine diphosphate. Positions 189, 237, 238, and 242 each coordinate K(+).

Tetramer of 2 alpha and 2 beta subunits. Thiamine diphosphate serves as cofactor.

It is found in the plastid. The protein localises to the chloroplast. It carries out the reaction N(6)-[(R)-lipoyl]-L-lysyl-[protein] + pyruvate + H(+) = N(6)-[(R)-S(8)-acetyldihydrolipoyl]-L-lysyl-[protein] + CO2. Its function is as follows. The pyruvate dehydrogenase complex catalyzes the overall conversion of pyruvate to acetyl-CoA and CO(2). It contains multiple copies of three enzymatic components: pyruvate dehydrogenase (E1), dihydrolipoamide acetyltransferase (E2) and lipoamide dehydrogenase (E3). The protein is Pyruvate dehydrogenase E1 component subunit beta-4, chloroplastic of Oryza sativa subsp. japonica (Rice).